Consider the following 87-residue polypeptide: Phosphocarrier protein HPr (87 aa).

The HPr domain maps to 1–87 (MASKDFHIVA…AETMTKEGLA (87 aa)). The Pros-phosphohistidine intermediate role is filled by histidine 15. The residue at position 46 (serine 46) is a Phosphoserine; by HPrK/P.

Belongs to the HPr family.

It localises to the cytoplasm. Phosphorylation on Ser-46 inhibits the phosphoryl transfer from enzyme I to HPr. Its function is as follows. General (non sugar-specific) component of the phosphoenolpyruvate-dependent sugar phosphotransferase system (sugar PTS). This major carbohydrate active-transport system catalyzes the phosphorylation of incoming sugar substrates concomitantly with their translocation across the cell membrane. The phosphoryl group from phosphoenolpyruvate (PEP) is transferred to the phosphoryl carrier protein HPr by enzyme I. Phospho-HPr then transfers it to the PTS EIIA domain. Functionally, P-Ser-HPr interacts with the catabolite control protein A (CcpA), forming a complex that binds to DNA at the catabolite response elements cre, operator sites preceding a large number of catabolite-regulated genes. Thus, P-Ser-HPr is a corepressor in carbon catabolite repression (CCR), a mechanism that allows bacteria to coordinate and optimize the utilization of available carbon sources. P-Ser-HPr also plays a role in inducer exclusion, in which it probably interacts with several non-PTS permeases and inhibits their transport activity. The chain is Phosphocarrier protein HPr (ptsH) from Streptococcus salivarius.